The following is a 96-amino-acid chain: Putative pterin-4-alpha-carbinolamine dehydratase (96 aa).

This sequence belongs to the pterin-4-alpha-carbinolamine dehydratase family.

It carries out the reaction (4aS,6R)-4a-hydroxy-L-erythro-5,6,7,8-tetrahydrobiopterin = (6R)-L-erythro-6,7-dihydrobiopterin + H2O. This is Putative pterin-4-alpha-carbinolamine dehydratase from Prochlorococcus marinus (strain SARG / CCMP1375 / SS120).